A 409-amino-acid polypeptide reads, in one-letter code: Peptidase T (409 aa).

Position 78 (His78) interacts with Zn(2+). Asp80 is an active-site residue. Asp140 contributes to the Zn(2+) binding site. The Proton acceptor role is filled by Glu174. Zn(2+) contacts are provided by Glu175, Asp197, and His379.

Belongs to the peptidase M20B family. The cofactor is Zn(2+).

Its subcellular location is the cytoplasm. It carries out the reaction Release of the N-terminal residue from a tripeptide.. Cleaves the N-terminal amino acid of tripeptides. The chain is Peptidase T from Vibrio parahaemolyticus serotype O3:K6 (strain RIMD 2210633).